Reading from the N-terminus, the 259-residue chain is UPF0246 protein VFMJ11_2214 (259 aa).

The protein belongs to the UPF0246 family.

This chain is UPF0246 protein VFMJ11_2214, found in Aliivibrio fischeri (strain MJ11) (Vibrio fischeri).